The sequence spans 217 residues: Translation initiation factor 6 (217 aa).

Belongs to the eIF-6 family.

Its function is as follows. Binds to the 50S ribosomal subunit and prevents its association with the 30S ribosomal subunit to form the 70S initiation complex. The polypeptide is Translation initiation factor 6 (Picrophilus torridus (strain ATCC 700027 / DSM 9790 / JCM 10055 / NBRC 100828 / KAW 2/3)).